Here is a 449-residue protein sequence, read N- to C-terminus: Uric acid permease PucJ (449 aa).

Helical transmembrane passes span 11-31 (LSLQHVLAMYAGAILVPLLVG), 41-61 (LSYLLAIDLLTCGVATLLQTL), 67-87 (GIGLPVMLGSSFVAVTPMIAI), 91-111 (YGIHAIYGSIIAAGVFIFLFA), 119-139 (VLFPPVVTGTVVTLIGLSLVP), 158-178 (EYGSLENLLLSVGVLVLILVL), 191-211 (VLIGIAAGTAAAAIMGKVSFS), 229-249 (APAFEIGPILTMLIVGIVIIV), 277-297 (AEGIAILIGGLFNAFPYNTFA), 313-333 (IVVTAGCILVCLGLIPKIAAL), 334-354 (ASAVPAAVLGGATVVMFGMVI), 372-392 (LLTIACSIALGIGASTAPGIF), and 401-421 (ILVSDGTITGSLTAIFLNLFF).

Belongs to the nucleobase:cation symporter-2 (NCS2) (TC 2.A.40) family.

Its subcellular location is the cell membrane. In terms of biological role, uptake of uric acid. This is Uric acid permease PucJ (pucJ) from Bacillus subtilis (strain 168).